We begin with the raw amino-acid sequence, 378 residues long: Ribosomal RNA large subunit methyltransferase G (378 aa).

This sequence belongs to the methyltransferase superfamily. RlmG family.

Its subcellular location is the cytoplasm. The catalysed reaction is guanosine(1835) in 23S rRNA + S-adenosyl-L-methionine = N(2)-methylguanosine(1835) in 23S rRNA + S-adenosyl-L-homocysteine + H(+). Specifically methylates the guanine in position 1835 (m2G1835) of 23S rRNA. This Escherichia coli O9:H4 (strain HS) protein is Ribosomal RNA large subunit methyltransferase G.